A 315-amino-acid chain; its full sequence is Ribonuclease Z (315 aa).

Residues H62, H64, D66, H67, H144, D215, and H273 each coordinate Zn(2+). Residue D66 is the Proton acceptor of the active site.

This sequence belongs to the RNase Z family. In terms of assembly, homodimer. Zn(2+) serves as cofactor.

It catalyses the reaction Endonucleolytic cleavage of RNA, removing extra 3' nucleotides from tRNA precursor, generating 3' termini of tRNAs. A 3'-hydroxy group is left at the tRNA terminus and a 5'-phosphoryl group is left at the trailer molecule.. In terms of biological role, zinc phosphodiesterase, which displays some tRNA 3'-processing endonuclease activity. Probably involved in tRNA maturation, by removing a 3'-trailer from precursor tRNA. This Synechococcus sp. (strain CC9311) protein is Ribonuclease Z.